Reading from the N-terminus, the 154-residue chain is Histone H2B.5 (154 aa).

Over residues 1 to 25 (MAPKAEKKPAAKKVAEEEPSEKAAP) the composition is skewed to basic and acidic residues. The interval 1 to 62 (MAPKAEKKPA…DKKGRKKAKK (62 aa)) is disordered. An N6-acetyllysine mark is found at lysine 7 and lysine 39. Residue lysine 150 forms a Glycyl lysine isopeptide (Lys-Gly) (interchain with G-Cter in ubiquitin) linkage.

It belongs to the histone H2B family. In terms of assembly, the nucleosome is a histone octamer containing two molecules each of H2A, H2B, H3 and H4 assembled in one H3-H4 heterotetramer and two H2A-H2B heterodimers. The octamer wraps approximately 147 bp of DNA. In terms of processing, can be acetylated to form H2BK6ac and H2BK33ac. Monoubiquitinated to form H2BK143ub1; may give a specific tag for epigenetic transcriptional activation.

It is found in the nucleus. The protein localises to the chromosome. In terms of biological role, core component of nucleosome. Nucleosomes wrap and compact DNA into chromatin, limiting DNA accessibility to the cellular machineries which require DNA as a template. Histones thereby play a central role in transcription regulation, DNA repair, DNA replication and chromosomal stability. DNA accessibility is regulated via a complex set of post-translational modifications of histones, also called histone code, and nucleosome remodeling. This is Histone H2B.5 from Zea mays (Maize).